We begin with the raw amino-acid sequence, 584 residues long: ATP-dependent lipid A-core flippase (584 aa).

Helical transmembrane passes span 18–38 (LWPIIFPFRVGLVVASITLIL), 65–85 (VFVWMPLALVGLMGIRGFSGF), 155–175 (IIGLCIMMFYYSWQLSLILVL), 252–272 (IFDPLIQCVASLALAFVLYAA), and 277–297 (VMEMLTAGTITVIFSSMIVLM). The ABC transmembrane type-1 domain occupies 30 to 312 (VVASITLILN…LTNVSAQFQR (283 aa)). An ABC transporter domain is found at 344-580 (IIFDDVTFFY…QGIYAQLYKL (237 aa)). 378 to 385 (GRSGSGKS) contacts ATP.

The protein belongs to the ABC transporter superfamily. Lipid exporter (TC 3.A.1.106) family. In terms of assembly, homodimer.

Its subcellular location is the cell inner membrane. It catalyses the reaction ATP + H2O + lipid A-core oligosaccharideSide 1 = ADP + phosphate + lipid A-core oligosaccharideSide 2.. In terms of biological role, involved in lipopolysaccharide (LPS) biosynthesis. Translocates lipid A-core from the inner to the outer leaflet of the inner membrane. Transmembrane domains (TMD) form a pore in the inner membrane and the ATP-binding domain (NBD) is responsible for energy generation. The sequence is that of ATP-dependent lipid A-core flippase from Blochmanniella pennsylvanica (strain BPEN).